The primary structure comprises 190 residues: Imidazoleglycerol-phosphate dehydratase (190 aa).

The protein belongs to the imidazoleglycerol-phosphate dehydratase family.

It localises to the cytoplasm. The enzyme catalyses D-erythro-1-(imidazol-4-yl)glycerol 3-phosphate = 3-(imidazol-4-yl)-2-oxopropyl phosphate + H2O. It participates in amino-acid biosynthesis; L-histidine biosynthesis; L-histidine from 5-phospho-alpha-D-ribose 1-diphosphate: step 6/9. This is Imidazoleglycerol-phosphate dehydratase from Sulfurimonas denitrificans (strain ATCC 33889 / DSM 1251) (Thiomicrospira denitrificans (strain ATCC 33889 / DSM 1251)).